Consider the following 208-residue polypeptide: F-box/kelch-repeat protein At2g43270 (208 aa).

An F-box domain is found at 1–44 (MIYVVPDLLEEIFLGLPLKSILRFKTVSKQWRSILESKSFAERR). The stretch at 149–200 (RDKFNGSYKVVRMCFSPVEKCEVLDVETGEWSELNPPPNDIDVGRKSVCVNG) is one Kelch repeat.

This is F-box/kelch-repeat protein At2g43270 from Arabidopsis thaliana (Mouse-ear cress).